The sequence spans 300 residues: Protoheme IX farnesyltransferase (300 aa).

The next 9 membrane-spanning stretches (helical) occupy residues 24–44, 46–66, 94–114, 118–138, 146–166, 172–192, 217–237, 239–259, and 278–298; these read VTQL…PGMV, WHVL…AFAI, PQIL…LYTF, LTMW…TLLL, IVIG…AVTG, AWIL…VLAL, LHIL…FISG, SGAV…AYAW, and IVYL…RPLL.

The protein belongs to the UbiA prenyltransferase family. Protoheme IX farnesyltransferase subfamily.

It is found in the cell inner membrane. The enzyme catalyses heme b + (2E,6E)-farnesyl diphosphate + H2O = Fe(II)-heme o + diphosphate. It participates in porphyrin-containing compound metabolism; heme O biosynthesis; heme O from protoheme: step 1/1. Functionally, converts heme B (protoheme IX) to heme O by substitution of the vinyl group on carbon 2 of heme B porphyrin ring with a hydroxyethyl farnesyl side group. This is Protoheme IX farnesyltransferase from Burkholderia lata (strain ATCC 17760 / DSM 23089 / LMG 22485 / NCIMB 9086 / R18194 / 383).